The primary structure comprises 93 residues: MPAACRCLFLLLLSACVALLLQPPLGTRGAPLEPVYPGDDATPEQMAQYAAELRRYINMLTRPRYGKRDRGEMRDILEWGSPHAAAPRELMDE.

The N-terminal stretch at methionine 1–glycine 29 is a signal peptide. Tyrosine 65 bears the Tyrosine amide mark. A propeptide spanning residues glutamate 89–glutamate 93 is cleaved from the precursor.

This sequence belongs to the NPY family.

It localises to the secreted. Functionally, hormone secreted by pancreatic cells that acts as a regulator of pancreatic and gastrointestinal functions probably by signaling through the G protein-coupled receptor NPY4R2. In Canis lupus familiaris (Dog), this protein is Pancreatic polypeptide prohormone (PPY).